A 125-amino-acid chain; its full sequence is UPF0102 protein CCNA_00142 (125 aa).

Belongs to the UPF0102 family.

The chain is UPF0102 protein CCNA_00142 from Caulobacter vibrioides (strain NA1000 / CB15N) (Caulobacter crescentus).